The chain runs to 533 residues: Inositol-3-phosphate synthase (533 aa).

T48 is subject to Phosphothreonine. Positions 74, 75, 76, 77, and 148 each coordinate NAD(+). 2 positions are modified to phosphoserine: S177 and S184. Positions 184, 185, 195, 196, 198, 244, 245, 246, 247, 295, 296, 320, 321, 323, 354, 355, and 356 each coordinate NAD(+). S296 carries the phosphoserine modification. S368 is subject to Phosphoserine. K369 is a binding site for NAD(+). S374 is subject to Phosphoserine. Positions 409, 410, 438, and 439 each coordinate NAD(+).

This sequence belongs to the myo-inositol 1-phosphate synthase family. Homotetramer. It depends on NAD(+) as a cofactor. Phosphorylation at Ser-184 and Ser-374 is associated with a decrease in activity. Increasingly phosphorylated in presence of valproate.

The protein localises to the cytoplasm. The catalysed reaction is D-glucose 6-phosphate = 1D-myo-inositol 3-phosphate. It participates in polyol metabolism; myo-inositol biosynthesis; myo-inositol from D-glucose 6-phosphate: step 1/2. Its activity is regulated as follows. Competitively inhibited by myo-2-inosose 1-phosphate, which is also an intermediate in the catalytic reaction. Competitively inhibited by 2-deoxy-myo-inositol 1-phosphate (dMIP), 1-deoxy-1-(phosphonomethyl)-myo-2-inosose (DPMI), dihydroxyacetone phosphate (DHAP), 6-deoxy-D-glucose 6-(E)-vinylhomophosphonate, 6-deoxy-D-glucitol 6-(E)-vinylhomophosphonate, 2,6-dideoxy-D-glucose 6-(E)-vinylhomophosphonate and 2,6-dideoxy-D-glucitol 6-(E)-vinylhomophosphonate. Inhibited by 2-deoxyglucitol 6-phosphate (dgtolP). In terms of biological role, key enzyme in myo-inositol biosynthesis pathway that catalyzes the conversion of glucose 6-phosphate to 1-myo-inositol 1-phosphate in a NAD-dependent manner. Rate-limiting enzyme in the synthesis of all inositol-containing compounds. This Saccharomyces cerevisiae (strain ATCC 204508 / S288c) (Baker's yeast) protein is Inositol-3-phosphate synthase (INO1).